A 412-amino-acid chain; its full sequence is MNIYLVGGAVRDSLLNLPVTEQDWVVVGATPEQLLKLGYQQVGKDFPVFLHPVSHEEYALARTERKSGQGYTGFTCYAAPDVTLEDDLLRRDLTVNAIARSADGEFIDPYHGKQDLENRVLRHVSDAFGEDPLRVLRVARFAARFAYLGFTIAPETMSLMSNMAQSGELSALTPERVWKETEKALKTQSPHVYFQVLRDCGALAVLFPEIERLFGVPAPEKWHPEIDTGIHTLMTLAIAAQLSPEVDIRFAALCHDLGKGLTPKEHWPHHHGHGPAGVKLVEQLCQRLRIPNPVRDLAKLVAEYHDLIHTVNKLRPETLLKLFNAIDVWRKPERLEQMIMTSEADARGRTGFENNPYPQGDYLRAAFQIANGVSIQEVVASGLQGLAIRDELQRRRQQALAEWKQTQETASI.

ATP contacts are provided by Gly8 and Arg11. Positions 8 and 11 each coordinate CTP. Mg(2+) contacts are provided by Glu21 and Asp23. Positions 91, 137, and 140 each coordinate ATP. Residues Arg91, Arg137, and Arg140 each coordinate CTP. The region spanning 228–329 (TGIHTLMTLA…LKLFNAIDVW (102 aa)) is the HD domain.

Belongs to the tRNA nucleotidyltransferase/poly(A) polymerase family. Bacterial CCA-adding enzyme type 1 subfamily. In terms of assembly, monomer. Can also form homodimers and oligomers. Mg(2+) is required as a cofactor. Ni(2+) serves as cofactor.

It catalyses the reaction a tRNA precursor + 2 CTP + ATP = a tRNA with a 3' CCA end + 3 diphosphate. The enzyme catalyses a tRNA with a 3' CCA end + 2 CTP + ATP = a tRNA with a 3' CCACCA end + 3 diphosphate. In terms of biological role, catalyzes the addition and repair of the essential 3'-terminal CCA sequence in tRNAs without using a nucleic acid template. Adds these three nucleotides in the order of C, C, and A to the tRNA nucleotide-73, using CTP and ATP as substrates and producing inorganic pyrophosphate. tRNA 3'-terminal CCA addition is required both for tRNA processing and repair. Also involved in tRNA surveillance by mediating tandem CCA addition to generate a CCACCA at the 3' terminus of unstable tRNAs. While stable tRNAs receive only 3'-terminal CCA, unstable tRNAs are marked with CCACCA and rapidly degraded. This chain is Multifunctional CCA protein, found in Yersinia pestis.